The sequence spans 1023 residues: Rho GTPase-activating protein 11A (1023 aa).

The 191-residue stretch at 49 to 239 folds into the Rho-GAP domain; the sequence is VPFNALPHSA…TLIDYASDIG (191 aa). At serine 285 the chain carries Phosphoserine. Threonine 306 is subject to Phosphothreonine. Phosphoserine occurs at positions 316 and 318. A Phosphothreonine modification is found at threonine 323. 3 positions are modified to phosphoserine: serine 339, serine 340, and serine 484. Threonine 508 carries the post-translational modification Phosphothreonine. The interval 567–589 is disordered; the sequence is TPSNLNNKHNSNITSSPLSGDEN. A phosphoserine mark is found at serine 582, serine 585, serine 638, and serine 675. The tract at residues 714–734 is disordered; that stretch reads KQEFSSDEEIKKQQSPKDKLN. Positions 721 to 734 are enriched in basic and acidic residues; the sequence is EEIKKQQSPKDKLN. Serine 847 carries the phosphoserine modification. Position 866 is a phosphothreonine (threonine 866). Position 868 is a phosphoserine (serine 868). Residues 999-1023 are disordered; the sequence is AWYKGSPKHPIGKTQLLPTSKPVDL.

The protein localises to the nucleus. GTPase activator for the Rho-type GTPases by converting them to an inactive GDP-bound state. This chain is Rho GTPase-activating protein 11A, found in Homo sapiens (Human).